Reading from the N-terminus, the 102-residue chain is Colipase-like protein 2 (102 aa).

The first 23 residues, 1–23 (MAFTQALVTVLALLAGTLPHRHS), serve as a signal peptide directing secretion. 5 cysteine pairs are disulfide-bonded: Cys36–Cys47, Cys42–Cys58, Cys46–Cys80, Cys68–Cys88, and Cys82–Cys99.

It belongs to the colipase family.

The protein localises to the secreted. The chain is Colipase-like protein 2 (Clpsl2) from Mus musculus (Mouse).